A 1723-amino-acid chain; its full sequence is Lymphocyte antigen 75 (1723 aa).

Positions 1-27 are cleaved as a signal peptide; sequence MRTGRVTPGLAAGLLLLLLRSFGLVEP. The Extracellular segment spans residues 28–1667; that stretch reads SESSGNDPFT…AVCKIPLSPD (1640 aa). Residues 33-182 enclose the Ricin B-type lectin domain; it reads NDPFTIVHEN…FLIGETWYHD (150 aa). The N-linked (GlcNAc...) asparagine glycan is linked to N135. Positions 164–211 constitute a Fibronectin type-II domain; sequence SYGRPCEFPFLIGETWYHDCIHDEDHSGPWCATTLSYEYDQKWGICLL. Intrachain disulfides connect C169–C194, C183–C209, C247–C340, and C317–C332. Residues 225–341 enclose the C-type lectin 1 domain; it reads QIGSCYQFNN…CESQQPYVCK (117 aa). 2 N-linked (GlcNAc...) asparagine glycosylation sites follow: N345 and N377. 3 C-type lectin domains span residues 368 to 486, 493 to 625, and 652 to 791; these read NNGF…YVCK, KDAE…ICKK, and SSLS…WVCQ. Intrachain disulfides connect C389-C485 and C462-C477. Residue N529 is glycosylated (N-linked (GlcNAc...) asparagine). Cystine bridges form between C597–C614, C678–C790, and C752–C782. N843 and N865 each carry an N-linked (GlcNAc...) asparagine glycan. A Phosphotyrosine modification is found at Y934. Residues N935, N1077, and N1104 are each glycosylated (N-linked (GlcNAc...) asparagine). The C-type lectin 5 domain occupies 959-1092; sequence FQNKCFLKVN…ERHSLSLCQK (134 aa). C1061 and C1081 are oxidised to a cystine. One can recognise a C-type lectin 6 domain in the interval 1111 to 1223; that stretch reads YLNNLYKIIS…DNQPGAICYY (113 aa). The cysteines at positions 1198 and 1212 are disulfide-linked. N-linked (GlcNAc...) asparagine glycans are attached at residues N1226, N1321, and N1393. In terms of domain architecture, C-type lectin 7 spans 1252–1375; that stretch reads FQNSCYNFMI…VIEETLHFYQ (124 aa). C-type lectin domains are found at residues 1402–1514 and 1543–1662; these read YKDG…ICYK and YGGH…VCKI. A disulfide bridge connects residues C1489 and C1503. N-linked (GlcNAc...) asparagine glycans are attached at residues N1594 and N1627. Residues C1636 and C1651 are joined by a disulfide bond. The chain crosses the membrane as a helical span at residues 1668-1692; that stretch reads YTGIAILFAVLCLLGLISLAIWFLL. At 1693–1723 the chain is on the cytoplasmic side; that stretch reads QRSHIRWTGFSSVRYEHGTNEDEVMLPSFHD. Phosphoserine occurs at positions 1704 and 1720.

N-glycosylated. In terms of tissue distribution, expressed in dendritic and thymic epithelial cells and lymph nodes.

It is found in the membrane. Functionally, acts as an endocytic receptor to direct captured antigens from the extracellular space to a specialized antigen-processing compartment. Causes reduced proliferation of B lymphocytes. This is Lymphocyte antigen 75 (Ly75) from Mus musculus (Mouse).